We begin with the raw amino-acid sequence, 725 residues long: Ribonuclease Y (725 aa).

Residues 4–24 (VLVILLSLVLLVLVALILAVA) traverse the membrane as a helical segment. 3 disordered regions span residues 62–140 (DGPA…ASDT), 165–195 (VAAT…SVRR), and 300–321 (EQRV…AGRE). Low complexity-rich tracts occupy residues 84 to 100 (DAPG…PDAG) and 114 to 137 (AAAP…PADA). Residues 415-481 (VVTVLHLPGD…RITLAALVSD (67 aa)) enclose the KH domain. One can recognise an HD domain in the interval 541 to 634 (VLAHLIESAH…TQAADQISGG (94 aa)).

The protein belongs to the RNase Y family.

The protein localises to the cell membrane. Endoribonuclease that initiates mRNA decay. The protein is Ribonuclease Y of Frankia alni (strain DSM 45986 / CECT 9034 / ACN14a).